The following is a 94-amino-acid chain: Co-chaperonin GroES (94 aa).

It belongs to the GroES chaperonin family. In terms of assembly, heptamer of 7 subunits arranged in a ring. Interacts with the chaperonin GroEL.

It is found in the cytoplasm. In terms of biological role, together with the chaperonin GroEL, plays an essential role in assisting protein folding. The GroEL-GroES system forms a nano-cage that allows encapsulation of the non-native substrate proteins and provides a physical environment optimized to promote and accelerate protein folding. GroES binds to the apical surface of the GroEL ring, thereby capping the opening of the GroEL channel. The sequence is that of Co-chaperonin GroES from Lactococcus lactis subsp. lactis (strain IL1403) (Streptococcus lactis).